Consider the following 327-residue polypeptide: MEGIKGSEVNVPDAVFAWLLDGKGGARHLEDNDVIDSEHPCWLHLNYTHPDSAQWLASTPLLPNNVRDALAGDSVRPRVSRLGDGTLITLRCINGSTDERPDQLVAMRLYMDERLIVSTRQRKVLALDDVVNDLKEGTGPADCGGWLVDVCDALTDHASEFIEELHDKIIDLEDNLLDQHIPPRGSLALLRKQLIVMRRYMTPQRDVYARLASERLSWMTDDQRRRMQDIADRLGRGLDEIDSCIARTAVMSDEIAQVMQESLSRRTYTMSLMAMVFLPSTFLTGLFGVNLGGIPGGGYQFGFSAFCIMLVVLIGGVAWWLHRSKWL.

The Cytoplasmic portion of the chain corresponds to 1–273 (MEGIKGSEVN…SRRTYTMSLM (273 aa)). The helical transmembrane segment at 274-294 (AMVFLPSTFLTGLFGVNLGGI) threads the bilayer. Residues 295-300 (PGGGYQ) lie on the Periplasmic side of the membrane. The chain crosses the membrane as a helical span at residues 301–321 (FGFSAFCIMLVVLIGGVAWWL). Residues 322–327 (HRSKWL) lie on the Cytoplasmic side of the membrane.

It belongs to the CorA metal ion transporter (MIT) (TC 1.A.35) family.

The protein resides in the cell inner membrane. It catalyses the reaction Zn(2+)(out) + H(+)(out) = Zn(2+)(in) + H(+)(in). Functionally, zinc transporter. Acts as a Zn(2+):proton symporter, which likely mediates zinc ion uptake. The polypeptide is Zinc transport protein ZntB (Enterobacter sp. (strain 638)).